Reading from the N-terminus, the 543-residue chain is Phosphoribosylaminoimidazole carboxylase (543 aa).

One can recognise an ATP-grasp domain in the interval 110 to 297; that stretch reads KEHLIKNGIA…QFEAHVRAIT (188 aa). ATP is bound at residue 137 to 192; the sequence is GAKYGFPYMLKSRTMAYDGRGNFVVKDKSYIPEALKVLDDRPLYAEKWAPFSKELA.

In the C-terminal section; belongs to the AIR carboxylase family. Class I subfamily.

The catalysed reaction is 5-amino-1-(5-phospho-D-ribosyl)imidazole-4-carboxylate + H(+) = 5-amino-1-(5-phospho-beta-D-ribosyl)imidazole + CO2. It functions in the pathway purine metabolism; IMP biosynthesis via de novo pathway; 5-amino-1-(5-phospho-D-ribosyl)imidazole-4-carboxylate from 5-amino-1-(5-phospho-D-ribosyl)imidazole (carboxylase route): step 1/1. This chain is Phosphoribosylaminoimidazole carboxylase (ADE1), found in Ogataea methanolica (Yeast).